The primary structure comprises 156 residues: MSRRGTAEKKKIAKSDPIYRNRVVNMLVNRIMKHGKKSLAYLIIYRAMKRIQQKTKTNPLSVLREAIRRVTPNLAVKARRVSGSTHQVPIEIESTQGKELAIRWLLAASRKRPGRNMAFKLSSELVDAAKGSGDAIRKKEETHRMAEANRTFAHFR.

This sequence belongs to the universal ribosomal protein uS7 family. In terms of assembly, part of the 30S ribosomal subunit.

Its subcellular location is the plastid. It is found in the chloroplast. One of the primary rRNA binding proteins, it binds directly to 16S rRNA where it nucleates assembly of the head domain of the 30S subunit. The polypeptide is Small ribosomal subunit protein uS7c (rps7) (Pisum sativum (Garden pea)).